Here is a 459-residue protein sequence, read N- to C-terminus: Peptidyl-prolyl cis-trans isomerase FKBP4 (459 aa).

At methionine 1 the chain carries N-acetylmethionine; in peptidyl-prolyl cis-trans isomerase FKBP4; alternate. Residues 1–24 (MTAEEMKATESGAQSAPLPMEGVD) form a disordered region. Threonine 2 is subject to N-acetylthreonine; in peptidyl-prolyl cis-trans isomerase FKBP4, N-terminally processed; partial. The PPIase FKBP-type 1 domain occupies 50–138 (GDRVFVHYTG…VFEVELFEFK (89 aa)). Position 143 is a phosphothreonine; by CK2 (threonine 143). Residues 167–253 (GAIVEVALEG…KYELHLKSFE (87 aa)) form the PPIase FKBP-type 2 domain. Position 220 is a phosphotyrosine (tyrosine 220). Residues 267–400 (LEQSTIVKER…TQLAVCQQRI (134 aa)) form an interaction with tubulin region. 3 TPR repeats span residues 270 to 303 (STIVKERGTVYFKEGKYKQALLQYKKIVSWLEYE), 319 to 352 (LASHLNLAMCHLKLQAFSAAIESCNKALELDSNN), and 353 to 386 (EKGLFRRGEAHLAVNDFELARADFQKVLQLYPNN). Lysine 282 is modified (N6-acetyllysine). Omega-N-methylarginine is present on arginine 373. The interval 421–459 (EENKAKAEASSGDHPTDTEMKEEQKSNTAGSQSQVETEA) is disordered. Over residues 434 to 445 (HPTDTEMKEEQK) the composition is skewed to basic and acidic residues. Threonine 436 is modified (phosphothreonine). Residue lysine 441 forms a Glycyl lysine isopeptide (Lys-Gly) (interchain with G-Cter in SUMO1) linkage. A compositionally biased stretch (polar residues) spans 446 to 459 (SNTAGSQSQVETEA). Serine 451 and serine 453 each carry phosphoserine.

As to quaternary structure, homodimer. Interacts with GLMN. Associates with HSP90AA1 and HSP70 in steroid hormone receptor complexes. Also interacts with peroxisomal phytanoyl-CoA alpha-hydroxylase (PHYH). Interacts with NR3C1 and dynein. Interacts with HSF1 in the HSP90 complex. Associates with tubulin. Interacts with MAPT/TAU. Interacts (via TPR domain) with S100A1, S100A2 and S100A6; the interaction is Ca(2+) dependent. Interaction with S100A1 and S100A2 (but not with S100A6) leads to inhibition of FKBP4-HSP90 interaction. Interacts with dynein; causes partially NR3C1 transport to the nucleus. Phosphorylation by CK2 results in loss of HSP90 binding activity. In terms of tissue distribution, widely expressed.

It is found in the cytoplasm. Its subcellular location is the cytosol. The protein localises to the mitochondrion. It localises to the nucleus. The protein resides in the cytoskeleton. It is found in the cell projection. Its subcellular location is the axon. It carries out the reaction [protein]-peptidylproline (omega=180) = [protein]-peptidylproline (omega=0). Inhibited by FK506. Immunophilin protein with PPIase and co-chaperone activities. Component of steroid receptors heterocomplexes through interaction with heat-shock protein 90 (HSP90). May play a role in the intracellular trafficking of heterooligomeric forms of steroid hormone receptors between cytoplasm and nuclear compartments. The isomerase activity controls neuronal growth cones via regulation of TRPC1 channel opening. Also acts as a regulator of microtubule dynamics by inhibiting MAPT/TAU ability to promote microtubule assembly. May have a protective role against oxidative stress in mitochondria. This Homo sapiens (Human) protein is Peptidyl-prolyl cis-trans isomerase FKBP4 (FKBP4).